The chain runs to 341 residues: Mitochondrial ubiquitin ligase activator of nfkb 1-A (341 aa).

At 1-5 (MEDFP) the chain is on the cytoplasmic side. A helical transmembrane segment spans residues 6–26 (VLEMVCLGSSVALSGLFYYIY). Topologically, residues 27-233 (RKKRKTVDKL…LLMEQEGQAE (207 aa)) are mitochondrial intermembrane. Residues 234–254 (VWRVFACICALAGVAVLIWTG) traverse the membrane as a helical segment. Residues 255–341 (RRYYRQLKLR…IKRVVPLYQA (87 aa)) are Cytoplasmic-facing. The RING-type zinc-finger motif lies at 292 to 329 (CVICLSNPRGCVLLDCGHVCCCFRCYQALPQPFCPICR).

In terms of assembly, homooligomer.

It is found in the mitochondrion outer membrane. The enzyme catalyses S-ubiquitinyl-[E2 ubiquitin-conjugating enzyme]-L-cysteine + [acceptor protein]-L-lysine = [E2 ubiquitin-conjugating enzyme]-L-cysteine + N(6)-ubiquitinyl-[acceptor protein]-L-lysine.. The protein operates within protein modification; protein ubiquitination. Functionally, E3 ubiquitin-protein ligase that plays a role in the control of mitochondrial morphology. Promotes mitochondrial fragmentation and influences mitochondrial localization. Inhibits cell growth. E3 ubiquitin ligases accept ubiquitin from an E2 ubiquitin-conjugating enzyme in the form of a thioester and then directly transfer the ubiquitin to targeted substrates. This is Mitochondrial ubiquitin ligase activator of nfkb 1-A (mul1a) from Danio rerio (Zebrafish).